A 215-amino-acid polypeptide reads, in one-letter code: Cytochrome b6 (215 aa).

A helical transmembrane segment spans residues 32–52 (IFYCLGGITLTCFLVQVATGF). Heme c is bound at residue C35. Residues H86 and H100 each contribute to the heme b site. Helical transmembrane passes span 90 to 110 (ASMMVLMMILHVFRVYLTGGF), 116 to 136 (LTWVTGVVLAVLTASFGVTGY), and 186 to 206 (LHTFVLPLLTAVFMLMHFPMI). Heme b is bound by residues H187 and H202.

The protein belongs to the cytochrome b family. PetB subfamily. The 4 large subunits of the cytochrome b6-f complex are cytochrome b6, subunit IV (17 kDa polypeptide, PetD), cytochrome f and the Rieske protein, while the 4 small subunits are PetG, PetL, PetM and PetN. The complex functions as a dimer. Requires heme b as cofactor. It depends on heme c as a cofactor.

The protein resides in the plastid. The protein localises to the chloroplast thylakoid membrane. Its function is as follows. Component of the cytochrome b6-f complex, which mediates electron transfer between photosystem II (PSII) and photosystem I (PSI), cyclic electron flow around PSI, and state transitions. The protein is Cytochrome b6 of Nicotiana tomentosiformis (Tobacco).